The following is a 289-amino-acid chain: Purine nucleoside phosphorylase (289 aa).

Met1 carries the N-acetylmethionine modification. Residues Ser33, His64, and 84–86 contribute to the phosphate site; that span reads RFH. Tyr88 provides a ligand contact to a purine D-ribonucleoside. Ala116 lines the phosphate pocket. A purine D-ribonucleoside is bound by residues Glu201 and Met219. Ser220 is a binding site for phosphate. Position 243 (Asn243) interacts with a purine D-ribonucleoside. Ser251 is subject to Phosphoserine. His257 lines the a purine D-ribonucleoside pocket.

Belongs to the PNP/MTAP phosphorylase family. As to quaternary structure, homotrimer.

The protein localises to the cytoplasm. It carries out the reaction inosine + phosphate = alpha-D-ribose 1-phosphate + hypoxanthine. The enzyme catalyses guanosine + phosphate = alpha-D-ribose 1-phosphate + guanine. It catalyses the reaction 2'-deoxyguanosine + phosphate = 2-deoxy-alpha-D-ribose 1-phosphate + guanine. The catalysed reaction is 2'-deoxyinosine + phosphate = 2-deoxy-alpha-D-ribose 1-phosphate + hypoxanthine. It participates in purine metabolism; purine nucleoside salvage. Its function is as follows. Catalyzes the phosphorolytic breakdown of the N-glycosidic bond in the beta-(deoxy)ribonucleoside molecules, with the formation of the corresponding free purine bases and pentose-1-phosphate. Preferentially acts on 6-oxopurine nucleosides including inosine and guanosine. The polypeptide is Purine nucleoside phosphorylase (PNP) (Bos taurus (Bovine)).